Here is a 112-residue protein sequence, read N- to C-terminus: Large ribosomal subunit protein eL31 (112 aa).

Belongs to the eukaryotic ribosomal protein eL31 family. As to quaternary structure, component of the large ribosomal subunit. Mature ribosomes consist of a small (40S) and a large (60S) subunit. The 40S subunit contains about 32 different proteins and 1 molecule of RNA (18S). The 60S subunit contains 45 different proteins and 3 molecules of RNA (25S, 5.8S and 5S).

Its subcellular location is the cytoplasm. Component of the ribosome, a large ribonucleoprotein complex responsible for the synthesis of proteins in the cell. The small ribosomal subunit (SSU) binds messenger RNAs (mRNAs) and translates the encoded message by selecting cognate aminoacyl-transfer RNA (tRNA) molecules. The large subunit (LSU) contains the ribosomal catalytic site termed the peptidyl transferase center (PTC), which catalyzes the formation of peptide bonds, thereby polymerizing the amino acids delivered by tRNAs into a polypeptide chain. The nascent polypeptides leave the ribosome through a tunnel in the LSU and interact with protein factors that function in enzymatic processing, targeting, and the membrane insertion of nascent chains at the exit of the ribosomal tunnel. This chain is Large ribosomal subunit protein eL31, found in Candida albicans (strain SC5314 / ATCC MYA-2876) (Yeast).